A 314-amino-acid polypeptide reads, in one-letter code: Melanocyte-stimulating hormone receptor (314 aa).

Topologically, residues M1–G35 are extracellular. 3 N-linked (GlcNAc...) asparagine glycosylation sites follow: N15, N20, and N23. A helical transmembrane segment spans residues L36 to I61. Topologically, residues L62–P70 are cytoplasmic. Residues T71–A91 form a helical membrane-spanning segment. At K92 to N116 the chain is on the extracellular side. A helical membrane pass occupies residues V117 to V138. The Cytoplasmic segment spans residues D139–V161. A helical transmembrane segment spans residues T162–Y181. The Extracellular portion of the chain corresponds to R182–C189. Residues L190–F209 traverse the membrane as a helical segment. At A210–A237 the chain is on the cytoplasmic side. Residues V238 to T263 traverse the membrane as a helical segment. Topologically, residues C264–Y276 are extracellular. Residues F277 to F297 form a helical membrane-spanning segment. The Cytoplasmic segment spans residues R298–W314. A lipid anchor (S-palmitoyl cysteine) is attached at C312.

This sequence belongs to the G-protein coupled receptor 1 family.

It localises to the cell membrane. Receptor for MSH (alpha, beta and gamma) and ACTH. The activity of this receptor is mediated by G proteins which activate adenylate cyclase. Mediates melanogenesis via regulation of cAMP signaling in melanocytes. The sequence is that of Melanocyte-stimulating hormone receptor (MC1R) from Gallus gallus (Chicken).